Reading from the N-terminus, the 164-residue chain is MTEITFKGGPIHLKGQQINEGDFAPDFTVLDNDLNQVTLADYAGKKKLISVVPSIDTGVCDQQTRKFNSEASKEEGIVLTISADLPFAQKRWCASAGLDNVITLSDHRDLSFGENYGVVMEELRLLARAVFVLDADNKVVYKEIVSEGTDFPDFDAALAAYKNI.

Residues 18–163 (INEGDFAPDF…FDAALAAYKN (146 aa)) form the Thioredoxin domain. The active-site Cysteine sulfenic acid (-SOH) intermediate is the Cys60. Residues Cys60 and Cys93 are joined by a disulfide bond.

This sequence belongs to the peroxiredoxin family. Tpx subfamily. As to quaternary structure, homodimer.

It carries out the reaction a hydroperoxide + [thioredoxin]-dithiol = an alcohol + [thioredoxin]-disulfide + H2O. In terms of biological role, thiol-specific peroxidase that catalyzes the reduction of hydrogen peroxide and organic hydroperoxides to water and alcohols, respectively. Plays a role in cell protection against oxidative stress by detoxifying peroxides. This is Thiol peroxidase from Staphylococcus aureus (strain MRSA252).